Here is a 503-residue protein sequence, read N- to C-terminus: ATP synthase subunit alpha (503 aa).

170 to 177 lines the ATP pocket; the sequence is GDKQTGKT.

The protein belongs to the ATPase alpha/beta chains family. In terms of assembly, F-type ATPases have 2 components, CF(1) - the catalytic core - and CF(0) - the membrane proton channel. CF(1) has five subunits: alpha(3), beta(3), gamma(1), delta(1), epsilon(1). CF(0) has three main subunits: a(1), b(2) and c(9-12). The alpha and beta chains form an alternating ring which encloses part of the gamma chain. CF(1) is attached to CF(0) by a central stalk formed by the gamma and epsilon chains, while a peripheral stalk is formed by the delta and b chains.

Its subcellular location is the cell inner membrane. It catalyses the reaction ATP + H2O + 4 H(+)(in) = ADP + phosphate + 5 H(+)(out). In terms of biological role, produces ATP from ADP in the presence of a proton gradient across the membrane. The alpha chain is a regulatory subunit. In Helicobacter acinonychis (strain Sheeba), this protein is ATP synthase subunit alpha.